The sequence spans 436 residues: Phosphate-repressible acid phosphatase (436 aa).

The N-terminal stretch at 1–20 (MKGTAASALLIALSATAAQA) is a signal peptide. Residues Asn227, Asn283, and Asn304 are each glycosylated (N-linked (GlcNAc...) asparagine).

In terms of assembly, monomer.

It carries out the reaction a phosphate monoester + H2O = an alcohol + phosphate. The polypeptide is Phosphate-repressible acid phosphatase (pacA) (Aspergillus niger).